Consider the following 222-residue polypeptide: Orotate phosphoribosyltransferase (222 aa).

Lysine 29 is a binding site for 5-phospho-alpha-D-ribose 1-diphosphate. 37–38 (FF) is an orotate binding site. Residues 75–76 (YK), arginine 101, lysine 102, lysine 105, histidine 107, and 126–134 (DDVISAGTS) each bind 5-phospho-alpha-D-ribose 1-diphosphate. Residues serine 130 and arginine 158 each contribute to the orotate site.

Belongs to the purine/pyrimidine phosphoribosyltransferase family. PyrE subfamily. Homodimer. The cofactor is Mg(2+).

It carries out the reaction orotidine 5'-phosphate + diphosphate = orotate + 5-phospho-alpha-D-ribose 1-diphosphate. It participates in pyrimidine metabolism; UMP biosynthesis via de novo pathway; UMP from orotate: step 1/2. Functionally, catalyzes the transfer of a ribosyl phosphate group from 5-phosphoribose 1-diphosphate to orotate, leading to the formation of orotidine monophosphate (OMP). The protein is Orotate phosphoribosyltransferase of Polynucleobacter necessarius subsp. necessarius (strain STIR1).